Consider the following 213-residue polypeptide: Putative 3-methyladenine DNA glycosylase (213 aa).

Belongs to the DNA glycosylase MPG family.

The chain is Putative 3-methyladenine DNA glycosylase from Leifsonia xyli subsp. xyli (strain CTCB07).